Consider the following 235-residue polypeptide: Class B acid phosphatase (235 aa).

An N-terminal signal peptide occupies residues 1 to 22; that stretch reads MKNLLKLSAIAILAASAVSTFA. D67 functions as the Nucleophile in the catalytic mechanism. Residues D67 and D69 each coordinate Mg(2+). D69 functions as the Proton donor in the catalytic mechanism. Substrate-binding positions include 135–136 and K175; that span reads TG. D190 is a Mg(2+) binding site.

Belongs to the class B bacterial acid phosphatase family. In terms of assembly, homotetramer. Mg(2+) serves as cofactor.

The protein resides in the periplasm. It carries out the reaction a phosphate monoester + H2O = an alcohol + phosphate. Functionally, dephosphorylates several organic phosphate monoesters. Also has a phosphotransferase activity catalyzing the transfer of low-energy phosphate groups from organic phosphate monoesters to free hydroxyl groups of various organic compounds. This chain is Class B acid phosphatase, found in Haemophilus parainfluenzae (strain T3T1).